The chain runs to 460 residues: tRNA-2-methylthio-N(6)-dimethylallyladenosine synthase (460 aa).

The region spanning 23 to 138 (RKVYVHTFGC…LPEMVARAER (116 aa)) is the MTTase N-terminal domain. [4Fe-4S] cluster is bound by residues cysteine 32, cysteine 68, cysteine 101, cysteine 176, cysteine 180, and cysteine 183. In terms of domain architecture, Radical SAM core spans 162-394 (ARGRPTAFVT…QAAQRRIAAA (233 aa)). The region spanning 397–460 (AAELGKVVEV…GGSSLSGTPA (64 aa)) is the TRAM domain.

It belongs to the methylthiotransferase family. MiaB subfamily. As to quaternary structure, monomer. It depends on [4Fe-4S] cluster as a cofactor.

Its subcellular location is the cytoplasm. It catalyses the reaction N(6)-dimethylallyladenosine(37) in tRNA + (sulfur carrier)-SH + AH2 + 2 S-adenosyl-L-methionine = 2-methylsulfanyl-N(6)-dimethylallyladenosine(37) in tRNA + (sulfur carrier)-H + 5'-deoxyadenosine + L-methionine + A + S-adenosyl-L-homocysteine + 2 H(+). Its function is as follows. Catalyzes the methylthiolation of N6-(dimethylallyl)adenosine (i(6)A), leading to the formation of 2-methylthio-N6-(dimethylallyl)adenosine (ms(2)i(6)A) at position 37 in tRNAs that read codons beginning with uridine. This Anaeromyxobacter sp. (strain Fw109-5) protein is tRNA-2-methylthio-N(6)-dimethylallyladenosine synthase.